The chain runs to 223 residues: Large ribosomal subunit protein uL3 (223 aa).

This sequence belongs to the universal ribosomal protein uL3 family. As to quaternary structure, part of the 50S ribosomal subunit. Forms a cluster with proteins L14 and L19.

One of the primary rRNA binding proteins, it binds directly near the 3'-end of the 23S rRNA, where it nucleates assembly of the 50S subunit. The chain is Large ribosomal subunit protein uL3 from Nocardioides sp. (strain ATCC BAA-499 / JS614).